Consider the following 329-residue polypeptide: Holliday junction branch migration complex subunit RuvB (329 aa).

A large ATPase domain (RuvB-L) region spans residues 1–180; sequence MKNILQSTEC…FGIPIHLEFY (180 aa). ATP is bound by residues Ile19, Arg20, Gly61, Lys64, Thr65, Thr66, 127–129, Arg170, Tyr180, and Arg217; that span reads EDF. Thr65 is a Mg(2+) binding site. Residues 181–252 are small ATPAse domain (RuvB-S); it reads STEELIKVIQ…FADKALLRLG (72 aa). Residues 255-329 are head domain (RuvB-H); sequence KLGLDRQDIQ…ISYLKEQSYI (75 aa). Residues Arg308 and Arg313 each coordinate DNA.

Belongs to the RuvB family. Homohexamer. Forms an RuvA(8)-RuvB(12)-Holliday junction (HJ) complex. HJ DNA is sandwiched between 2 RuvA tetramers; dsDNA enters through RuvA and exits via RuvB. An RuvB hexamer assembles on each DNA strand where it exits the tetramer. Each RuvB hexamer is contacted by two RuvA subunits (via domain III) on 2 adjacent RuvB subunits; this complex drives branch migration. In the full resolvosome a probable DNA-RuvA(4)-RuvB(12)-RuvC(2) complex forms which resolves the HJ.

The protein resides in the cytoplasm. It catalyses the reaction ATP + H2O = ADP + phosphate + H(+). Functionally, the RuvA-RuvB-RuvC complex processes Holliday junction (HJ) DNA during genetic recombination and DNA repair, while the RuvA-RuvB complex plays an important role in the rescue of blocked DNA replication forks via replication fork reversal (RFR). RuvA specifically binds to HJ cruciform DNA, conferring on it an open structure. The RuvB hexamer acts as an ATP-dependent pump, pulling dsDNA into and through the RuvAB complex. RuvB forms 2 homohexamers on either side of HJ DNA bound by 1 or 2 RuvA tetramers; 4 subunits per hexamer contact DNA at a time. Coordinated motions by a converter formed by DNA-disengaged RuvB subunits stimulates ATP hydrolysis and nucleotide exchange. Immobilization of the converter enables RuvB to convert the ATP-contained energy into a lever motion, pulling 2 nucleotides of DNA out of the RuvA tetramer per ATP hydrolyzed, thus driving DNA branch migration. The RuvB motors rotate together with the DNA substrate, which together with the progressing nucleotide cycle form the mechanistic basis for DNA recombination by continuous HJ branch migration. Branch migration allows RuvC to scan DNA until it finds its consensus sequence, where it cleaves and resolves cruciform DNA. The sequence is that of Holliday junction branch migration complex subunit RuvB from Ehrlichia canis (strain Jake).